We begin with the raw amino-acid sequence, 194 residues long: MNPFVIHTGVVAPLDRVNVDTDAIIPKQFLKRIERSGFGQFLFYEWRFTVDGAPIDSFILNTPAYKESTVLLARNNFGCGSSREHAPWALLDYGFRCVIAPSFADIFYNNCFKNGILPIKLSEEQVDELFNRAESKPNYQLTIDLQEQVVRDNEGLSYPFEVDSYRRYCLLNGLDDIGITLQYEDKIAAYEARR.

It belongs to the LeuD family. LeuD type 1 subfamily. In terms of assembly, heterodimer of LeuC and LeuD.

The enzyme catalyses (2R,3S)-3-isopropylmalate = (2S)-2-isopropylmalate. It participates in amino-acid biosynthesis; L-leucine biosynthesis; L-leucine from 3-methyl-2-oxobutanoate: step 2/4. In terms of biological role, catalyzes the isomerization between 2-isopropylmalate and 3-isopropylmalate, via the formation of 2-isopropylmaleate. The sequence is that of 3-isopropylmalate dehydratase small subunit from Brevibacillus brevis (strain 47 / JCM 6285 / NBRC 100599).